The sequence spans 154 residues: 6,7-dimethyl-8-ribityllumazine synthase (154 aa).

5-amino-6-(D-ribitylamino)uracil contacts are provided by residues Trp23, 57-59, and 81-83; these read AFE and AVI. Residue 86–87 participates in (2S)-2-hydroxy-3-oxobutyl phosphate binding; it reads AT. His89 serves as the catalytic Proton donor. Phe114 lines the 5-amino-6-(D-ribitylamino)uracil pocket. Arg128 provides a ligand contact to (2S)-2-hydroxy-3-oxobutyl phosphate.

This sequence belongs to the DMRL synthase family.

It carries out the reaction (2S)-2-hydroxy-3-oxobutyl phosphate + 5-amino-6-(D-ribitylamino)uracil = 6,7-dimethyl-8-(1-D-ribityl)lumazine + phosphate + 2 H2O + H(+). The protein operates within cofactor biosynthesis; riboflavin biosynthesis; riboflavin from 2-hydroxy-3-oxobutyl phosphate and 5-amino-6-(D-ribitylamino)uracil: step 1/2. Functionally, catalyzes the formation of 6,7-dimethyl-8-ribityllumazine by condensation of 5-amino-6-(D-ribitylamino)uracil with 3,4-dihydroxy-2-butanone 4-phosphate. This is the penultimate step in the biosynthesis of riboflavin. This chain is 6,7-dimethyl-8-ribityllumazine synthase, found in Sulfurimonas denitrificans (strain ATCC 33889 / DSM 1251) (Thiomicrospira denitrificans (strain ATCC 33889 / DSM 1251)).